The sequence spans 426 residues: Lipase 7 (426 aa).

The signal sequence occupies residues 1-15; sequence MFVFLALITLTTCLQ. N-linked (GlcNAc...) asparagine glycosylation is found at Asn-74, Asn-175, and Asn-179. Disulfide bonds link Cys-108–Cys-269 and Cys-341–Cys-385. Catalysis depends on Ser-190, which acts as the Charge relay system. An N-linked (GlcNAc...) asparagine glycan is attached at Asn-223. Catalysis depends on His-358, which acts as the Charge relay system. 4 N-linked (GlcNAc...) asparagine glycosylation sites follow: Asn-378, Asn-379, Asn-422, and Asn-423.

Belongs to the AB hydrolase superfamily. Lipase family. Class Lip subfamily.

The catalysed reaction is a triacylglycerol + H2O = a diacylglycerol + a fatty acid + H(+). Functionally, secreted lipase that is able to hydrolze both the neutral triacylglycerols and the monopalmitate ester Tween 40, allowing the use of hydrolyzed products as carbon sources. Has broad lipolytic activity, which may be important for colonization and subsequent infection, therefore contributing to the persistence and virulence in human tissue. This is Lipase 7 from Candida albicans (strain SC5314 / ATCC MYA-2876) (Yeast).